The primary structure comprises 195 residues: Large ribosomal subunit protein uL5 (195 aa).

Belongs to the universal ribosomal protein uL5 family. As to quaternary structure, part of the 50S ribosomal subunit; part of the 5S rRNA/L5/L18/L25 subcomplex. Contacts the 5S rRNA and the P site tRNA. Forms a bridge to the 30S subunit in the 70S ribosome.

Its function is as follows. This is one of the proteins that bind and probably mediate the attachment of the 5S RNA into the large ribosomal subunit, where it forms part of the central protuberance. In the 70S ribosome it contacts protein S13 of the 30S subunit (bridge B1b), connecting the 2 subunits; this bridge is implicated in subunit movement. Contacts the P site tRNA; the 5S rRNA and some of its associated proteins might help stabilize positioning of ribosome-bound tRNAs. The sequence is that of Large ribosomal subunit protein uL5 from Leifsonia xyli subsp. xyli (strain CTCB07).